Consider the following 168-residue polypeptide: Tyrosine-protein phosphatase (168 aa).

The Tyrosine-protein phosphatase domain occupies 24 to 168 (FKTPLRPELF…RQNYVQDLLI (145 aa)). Cys-119 (phosphocysteine intermediate) is an active-site residue.

This sequence belongs to the protein-tyrosine phosphatase family. Non-receptor class CDC14 subfamily.

The catalysed reaction is O-phospho-L-tyrosyl-[protein] + H2O = L-tyrosyl-[protein] + phosphate. In terms of biological role, plays a role in the regulation and processing of late viral mRNAs by displaying RNA 5'-triphosphatase and diphosphatase activities. This is Tyrosine-protein phosphatase (PTP) from Autographa californica nuclear polyhedrosis virus (AcMNPV).